Consider the following 117-residue polypeptide: Small ribosomal subunit protein bS18c (117 aa).

Residues 86–117 are disordered; the sequence is SELTPRTNALKARNKNKQNKYQNNQTKFLSNF.

It belongs to the bacterial ribosomal protein bS18 family. As to quaternary structure, part of the 30S ribosomal subunit.

Its subcellular location is the plastid. The polypeptide is Small ribosomal subunit protein bS18c (Cuscuta exaltata (Tall dodder)).